The primary structure comprises 368 residues: Propane 2-monooxygenase, hydroxylase component small subunit (368 aa).

The disordered stretch occupies residues 1-33 (MSAPAQPRERSFPSIEFTDAEADAREFPSSRSR).

This sequence belongs to the TmoE/XamoE family. As to quaternary structure, the propane 2-monooxygenase multicomponent enzyme system is composed of an electron transfer component and a monooxygenase component interacting with the effector protein PrmD. The electron transfer component is composed of a reductase (PrmB), and the monooxygenase component is formed by a large subunit (PrmA) and a small subunit (PrmC). Probably requires the presence of the chaperonin-like protein PrmG to ensure a productive folding, resulting of a soluble PrmC, which leads to the active form of PrmABCD.

The catalysed reaction is propane + NADH + O2 + H(+) = propan-2-ol + NAD(+) + H2O. The enzyme catalyses phenol + NADH + O2 + H(+) = hydroquinone + NAD(+) + H2O. Functionally, component of the propane 2-monooxygenase multicomponent enzyme system which is involved in the degradation of propane via the O2-dependent hydroxylation of propane. Under acetone induction, also able to catalyze the oxidation of phenol to yield hydroquinone. The chain is Propane 2-monooxygenase, hydroxylase component small subunit from Gordonia sp. (strain TY-5).